A 326-amino-acid polypeptide reads, in one-letter code: Malate dehydrogenase (326 aa).

An NAD(+)-binding site is contributed by 12–18 (GAAGQIA). Substrate-binding residues include Arg93 and Arg99. NAD(+) contacts are provided by residues Asn106, Gln113, and 130–132 (VGN). Positions 132 and 163 each coordinate substrate. The active-site Proton acceptor is His188.

It belongs to the LDH/MDH superfamily. MDH type 2 family.

The enzyme catalyses (S)-malate + NAD(+) = oxaloacetate + NADH + H(+). Its function is as follows. Catalyzes the reversible oxidation of malate to oxaloacetate. This chain is Malate dehydrogenase, found in Corynebacterium diphtheriae (strain ATCC 700971 / NCTC 13129 / Biotype gravis).